Here is a 156-residue protein sequence, read N- to C-terminus: Dynein 16 kDa light chain, flagellar outer arm (156 aa).

The 115-residue stretch at 2-116 (AAGLPPVQYS…LNQQVLSLTP (115 aa)) folds into the Thioredoxin domain. A disulfide bridge links Cys37 with Cys40.

As to quaternary structure, consists of at least 3 heavy chains (alpha, beta and gamma), 2 intermediate chains and 8 light chains.

The protein resides in the cell projection. It is found in the cilium. It localises to the flagellum. The protein localises to the cytoplasm. Its subcellular location is the cytoskeleton. The protein resides in the flagellum axoneme. In terms of biological role, may be involved in regulating the redox state of functionally important thiol groups within dynein. This Chlamydomonas reinhardtii (Chlamydomonas smithii) protein is Dynein 16 kDa light chain, flagellar outer arm.